The following is a 153-amino-acid chain: Large ribosomal subunit protein uL23m (153 aa).

The tract at residues 131-153 is disordered; sequence MADEQQRQGSDPQRGGVPNWFSL.

It belongs to the universal ribosomal protein uL23 family. Component of the mitochondrial ribosome large subunit (39S) which comprises a 16S rRNA and about 50 distinct proteins.

It localises to the mitochondrion. This chain is Large ribosomal subunit protein uL23m (MRPL23), found in Otolemur garnettii (Small-eared galago).